The primary structure comprises 38 residues: Photosystem II reaction center protein L (38 aa).

The chain crosses the membrane as a helical span at residues 17 to 37 (SLFWGLLLIFVLAILFSNYFF).

The protein belongs to the PsbL family. In terms of assembly, PSII is composed of 1 copy each of membrane proteins PsbA, PsbB, PsbC, PsbD, PsbE, PsbF, PsbH, PsbI, PsbJ, PsbK, PsbL, PsbM, PsbT, PsbX, PsbY, PsbZ, Psb30/Ycf12, at least 3 peripheral proteins of the oxygen-evolving complex and a large number of cofactors. It forms dimeric complexes.

The protein resides in the plastid. The protein localises to the chloroplast thylakoid membrane. In terms of biological role, one of the components of the core complex of photosystem II (PSII). PSII is a light-driven water:plastoquinone oxidoreductase that uses light energy to abstract electrons from H(2)O, generating O(2) and a proton gradient subsequently used for ATP formation. It consists of a core antenna complex that captures photons, and an electron transfer chain that converts photonic excitation into a charge separation. This subunit is found at the monomer-monomer interface and is required for correct PSII assembly and/or dimerization. The protein is Photosystem II reaction center protein L of Chara vulgaris (Common stonewort).